The chain runs to 190 residues: Peptidyl-tRNA hydrolase (190 aa).

Phe-14 lines the tRNA pocket. The Proton acceptor role is filled by His-19. TRNA contacts are provided by Met-64, Asn-66, and Asn-112.

It belongs to the PTH family. In terms of assembly, monomer.

It localises to the cytoplasm. It catalyses the reaction an N-acyl-L-alpha-aminoacyl-tRNA + H2O = an N-acyl-L-amino acid + a tRNA + H(+). Hydrolyzes ribosome-free peptidyl-tRNAs (with 1 or more amino acids incorporated), which drop off the ribosome during protein synthesis, or as a result of ribosome stalling. Its function is as follows. Catalyzes the release of premature peptidyl moieties from peptidyl-tRNA molecules trapped in stalled 50S ribosomal subunits, and thus maintains levels of free tRNAs and 50S ribosomes. This Staphylococcus saprophyticus subsp. saprophyticus (strain ATCC 15305 / DSM 20229 / NCIMB 8711 / NCTC 7292 / S-41) protein is Peptidyl-tRNA hydrolase.